An 89-amino-acid chain; its full sequence is Small ribosomal subunit protein bS20 (89 aa).

The tract at residues 1 to 28 (MTLANIKSAKKRAVQSEKRRQHNASQRS) is disordered.

Belongs to the bacterial ribosomal protein bS20 family.

Functionally, binds directly to 16S ribosomal RNA. In Haemophilus ducreyi (strain 35000HP / ATCC 700724), this protein is Small ribosomal subunit protein bS20.